A 182-amino-acid polypeptide reads, in one-letter code: NADH-quinone oxidoreductase subunit I (182 aa).

4Fe-4S ferredoxin-type domains lie at 52–82 (LTRD…LQKA) and 92–121 (EFFR…LTPD). [4Fe-4S] cluster-binding residues include cysteine 62, cysteine 65, cysteine 68, cysteine 72, cysteine 101, cysteine 104, cysteine 107, and cysteine 111.

This sequence belongs to the complex I 23 kDa subunit family. As to quaternary structure, NDH-1 is composed of 13 different subunits. Subunits NuoA, H, J, K, L, M, N constitute the membrane sector of the complex. [4Fe-4S] cluster serves as cofactor.

The protein localises to the cell inner membrane. It catalyses the reaction a quinone + NADH + 5 H(+)(in) = a quinol + NAD(+) + 4 H(+)(out). In terms of biological role, NDH-1 shuttles electrons from NADH, via FMN and iron-sulfur (Fe-S) centers, to quinones in the respiratory chain. The immediate electron acceptor for the enzyme in this species is believed to be ubiquinone. Couples the redox reaction to proton translocation (for every two electrons transferred, four hydrogen ions are translocated across the cytoplasmic membrane), and thus conserves the redox energy in a proton gradient. This Pseudomonas entomophila (strain L48) protein is NADH-quinone oxidoreductase subunit I.